The primary structure comprises 482 residues: Glycogen synthase (482 aa).

Residue lysine 18 coordinates ADP-alpha-D-glucose.

It belongs to the glycosyltransferase 1 family. Bacterial/plant glycogen synthase subfamily.

It carries out the reaction [(1-&gt;4)-alpha-D-glucosyl](n) + ADP-alpha-D-glucose = [(1-&gt;4)-alpha-D-glucosyl](n+1) + ADP + H(+). It functions in the pathway glycan biosynthesis; glycogen biosynthesis. In terms of biological role, synthesizes alpha-1,4-glucan chains using ADP-glucose. The sequence is that of Glycogen synthase from Rhodopseudomonas palustris (strain HaA2).